The following is a 93-amino-acid chain: MQTAYWVMLMMMVCITAPLPEGGKPNSGIRGLVPNDLTPQHTLRSLISRRQTDVLLDATLLTTPAPEQRLFCFWKSCWPRPYPWRRRDLNGKR.

A signal peptide spans 1-22 (MQTAYWVMLMMMVCITAPLPEG). The propeptide occupies 23–69 (GKPNSGIRGLVPNDLTPQHTLRSLISRRQTDVLLDATLLTTPAPEQR). A disulfide bridge connects residues Cys-72 and Cys-77. Trp-74 carries the post-translational modification D-tryptophan. Positions 79–93 (PRPYPWRRRDLNGKR) are excised as a propeptide.

Belongs to the conotoxin C superfamily. Consomatin family. In terms of tissue distribution, expressed by the venom duct.

The protein resides in the secreted. In terms of biological role, potently activates human somatostatin receptors (SSTR) with a specific activation of SSTR2 (EC(50)=2.6 nM). This is Consomatin G1 from Conus geographus (Geography cone).